The primary structure comprises 275 residues: Ribosomal protein L11 methyltransferase (275 aa).

Positions 130, 151, 172, and 213 each coordinate S-adenosyl-L-methionine.

Belongs to the methyltransferase superfamily. PrmA family.

The protein resides in the cytoplasm. It catalyses the reaction L-lysyl-[protein] + 3 S-adenosyl-L-methionine = N(6),N(6),N(6)-trimethyl-L-lysyl-[protein] + 3 S-adenosyl-L-homocysteine + 3 H(+). In terms of biological role, methylates ribosomal protein L11. The sequence is that of Ribosomal protein L11 methyltransferase from Wolinella succinogenes (strain ATCC 29543 / DSM 1740 / CCUG 13145 / JCM 31913 / LMG 7466 / NCTC 11488 / FDC 602W) (Vibrio succinogenes).